The following is a 69-amino-acid chain: Conopeptide Y-Pl1 (69 aa).

A signal peptide spans 1 to 20; it reads MSKLGVVLFVFLLLLPLAAP. The propeptide occupies 21–69; it reads QPVGDQPADQPADRNAEARARFLHPFQYYTLYRYLTRFLHRYPIYYIRY.

It belongs to the conotoxin M superfamily. Conopeptide Y family. Expressed by the venom duct.

The protein resides in the secreted. Its function is as follows. Tyrosine-rich conopeptide that targets several channels/receptors that are expressed in Xenopus oocytes. These targets are the voltage-gated potassium channels Kv1.6/KCNA6 (IC(50) is 170 nM) and Kv1.2/KCNA2 (IC(50) is 2.0 uM), Nav1.2/SCN2A (30% of inhibition), and N-methyl-D-aspartate (NMDA) receptor (GRIN1/GRIN2A/GRIN3B and GRIN1/GRIN2B/GRIN3B) (15% of inhibition). In vivo, causes the marine worm N.virens to move very slowly in contrast to control worms, and causes seizures (at 5 nmol) and death (20 nmol) to mice when intracranially injected. The polypeptide is Conopeptide Y-Pl1 (Conus planorbis (Planorbis cone)).